We begin with the raw amino-acid sequence, 624 residues long: Low affinity potassium transport system protein Kup (624 aa).

Helical transmembrane passes span 9–29 (LPAITLAAIGVVYGDIGTSPL), 49–69 (VFGFLSLIFWLLIFVVSIKYL), 103–123 (VIMGLIGGSFFYGEVVITPAI), 137–157 (PQLDTWIVPLSIIVLTLLFMI), 165–185 (VGKLFAPIMLTWFLILAGLGL), 213–233 (VSFIALGAVVLSITGVEALYA), 247–267 (WFTVVLPSLTLNYFGQGALLL), 276–296 (PFFLLAPDWALIPLLIIAALA), 337–357 (IYIPFVNWMLYVAVVIVIVIV), 365–385 (LAAAYGIAVTGTMVLTSILST), 398–418 (FVALILIAFLCVDIPLFTANL), and 421–441 (LLSGGWLPLSLGTVMFIVMTT).

The protein belongs to the HAK/KUP transporter (TC 2.A.72) family.

It is found in the cell inner membrane. The enzyme catalyses K(+)(in) + H(+)(in) = K(+)(out) + H(+)(out). Responsible for the low-affinity transport of potassium into the cell. Likely operates as a K(+):H(+) symporter. This is Low affinity potassium transport system protein Kup from Shigella dysenteriae serotype 1 (strain Sd197).